The following is a 217-amino-acid chain: Protein GrpE (217 aa).

The segment at 1–63 (MAETSNSENK…AADSELSLQS (63 aa)) is disordered. Residues 10–32 (KTSEEAKASEKNSRSITLEETKL) show a composition bias toward basic and acidic residues. Residues 37–63 (SEESTQTTESTQAQAAEAADSELSLQS) are compositionally biased toward low complexity.

Belongs to the GrpE family. As to quaternary structure, homodimer.

It is found in the cytoplasm. In terms of biological role, participates actively in the response to hyperosmotic and heat shock by preventing the aggregation of stress-denatured proteins, in association with DnaK and GrpE. It is the nucleotide exchange factor for DnaK and may function as a thermosensor. Unfolded proteins bind initially to DnaJ; upon interaction with the DnaJ-bound protein, DnaK hydrolyzes its bound ATP, resulting in the formation of a stable complex. GrpE releases ADP from DnaK; ATP binding to DnaK triggers the release of the substrate protein, thus completing the reaction cycle. Several rounds of ATP-dependent interactions between DnaJ, DnaK and GrpE are required for fully efficient folding. This is Protein GrpE from Leptospira borgpetersenii serovar Hardjo-bovis (strain JB197).